The primary structure comprises 3387 residues: Genome polyprotein (3387 aa).

The Cytoplasmic portion of the chain corresponds to 1–100; the sequence is MNQRKKVARP…LNILNGRKRS (100 aa). A hydrophobic; homodimerization of capsid protein C region spans residues 36–71; that stretch reads LFSGKGPLRMVLAFITFLRVLSIPPTAGILKRWGQL. The propeptide at 100 to 113 is ER anchor for the capsid protein C, removed in mature form by serine protease NS3; sequence STITLLCLIPTVMA. The helical transmembrane segment at 101-117 threads the bilayer; that stretch reads TITLLCLIPTVMAFHLS. Residues 118-237 lie on the Extracellular side of the membrane; the sequence is TRDGEPLMIV…GAWKHAQRVE (120 aa). The N-linked (GlcNAc...) asparagine; by host glycan is linked to Asn182. The helical transmembrane segment at 238 to 258 threads the bilayer; the sequence is SWILRNPGFALLAGFMAYMIG. The Cytoplasmic portion of the chain corresponds to 259 to 265; that stretch reads QTGIQRT. Residues 266-279 traverse the membrane as a helical segment; that stretch reads VFFILMMLVAPSYG. The Extracellular segment spans residues 280–725; it reads MRCVGVGNRD…HQVFGSVYTT (446 aa). 4 cysteine pairs are disulfide-bonded: Cys282–Cys309, Cys339–Cys400, Cys353–Cys384, and Cys371–Cys395. N-linked (GlcNAc...) asparagine; by host glycosylation is present at Asn346. Residues 377 to 390 form a fusion peptide region; the sequence is DRGWGNGCGLFGKG. N-linked (GlcNAc...) asparagine; by host glycosylation occurs at Asn432. Intrachain disulfides connect Cys464–Cys564 and Cys581–Cys612. Residues 726-746 traverse the membrane as a helical segment; that stretch reads MFGGVSWMVRILIGLLVLWIG. Residues 747–753 lie on the Cytoplasmic side of the membrane; sequence TNSRNTS. A helical membrane pass occupies residues 754–774; the sequence is MAMSCIAVGGITLFLGFTVHA. Residues 775 to 1194 are Extracellular-facing; it reads DMGCAVSWSG…MLGDTMSGRM (420 aa). 6 cysteine pairs are disulfide-bonded: Cys778–Cys789, Cys829–Cys917, Cys953–Cys997, Cys1054–Cys1103, Cys1065–Cys1087, and Cys1086–Cys1090. Residues Asn904 and Asn981 are each glycosylated (N-linked (GlcNAc...) asparagine; by host). Residues 1195–1218 form a helical membrane-spanning segment; that stretch reads GGQIHLAIMAVFKMSPGYVLGIFL. The Lumenal segment spans residues 1219–1224; it reads RKLTSR. Residues 1225 to 1243 form a helical membrane-spanning segment; that stretch reads ETALMVIGMAMTTVLSIPH. At 1244-1267 the chain is on the cytoplasmic side; it reads DLMEFIDGISLGLILLKMVTHFDN. A helical transmembrane segment spans residues 1268-1288; that stretch reads TQVGTLALSLTFIKSTMPLVM. Residue Ala1289 is a topological domain, lumenal. Residues 1290–1308 traverse the membrane as a helical segment; it reads WRTIMAVLFVVTLIPLCRT. Residues 1309–1316 are Lumenal-facing; it reads SCLQKQSH. A helical membrane pass occupies residues 1317-1337; the sequence is WVEITALILGAQALPVYLMTL. The Cytoplasmic portion of the chain corresponds to 1338 to 1345; that stretch reads MKGASKRS. Residues 1346 to 1366 form a helical membrane-spanning segment; it reads WPLNEGIMAVGLVSLLGSALL. Residues 1367 to 1369 lie on the Lumenal side of the membrane; that stretch reads KND. A helical transmembrane segment spans residues 1370-1390; sequence VPLAGPMVAGGLLLAAYVMSG. Over 1391 to 1437 the chain is Cytoplasmic; the sequence is SSADLSLEKAANVQWDEMADITGSSPIIEVKQDEDGSFSIRDVEETN. The interacts with and activates NS3 protease stretch occupies residues 1397–1436; sequence LEKAANVQWDEMADITGSSPIIEVKQDEDGSFSIRDVEET. The segment at residues 1438–1458 is an intramembrane region (helical); that stretch reads MITLLVKLALITVSGLYPLAI. Residues 1459-2143 lie on the Cytoplasmic side of the membrane; that stretch reads PVTMTLWYMW…QHALNELPES (685 aa). The Peptidase S7 domain occupies 1475–1652; it reads SGALWDVPSP…ERIGEPDYEV (178 aa). Active-site charge relay system; for serine protease NS3 activity residues include His1525, Asp1549, and Ser1609. The Helicase ATP-binding domain occupies 1654–1810; the sequence is EDIFRKKRLT…QSNSPIEDIE (157 aa). The segment at 1658–1661 is important for RNA-binding; sequence RKKR. Position 1667–1674 (1667–1674) interacts with ATP; sequence LHPGAGKT. Positions 1758-1761 match the DEAH box motif; it reads DEAH. One can recognise a Helicase C-terminal domain in the interval 1820–1987; sequence TGFDWITDYQ…IIPTLFGPER (168 aa). At Lys1862 the chain carries N6-acetyllysine; by host. A helical transmembrane segment spans residues 2144 to 2164; sequence LETLMLVALLGAMTAGIFLFF. Over 2165–2169 the chain is Lumenal; that stretch reads MQGKG. The segment at residues 2170–2190 is an intramembrane region (helical); sequence IGKLSMGLIAIAVASGLLWVA. Glu2191 is a topological domain (lumenal). Residues 2192 to 2212 traverse the membrane as a helical segment; sequence IQPQWIAASIILEFFLMVLLV. Topologically, residues 2213 to 2225 are cytoplasmic; that stretch reads PEPEKQRTPQDNQ. Residues 2226–2246 form a helical membrane-spanning segment; that stretch reads LIYVILTILTIIALVAANEMG. Topologically, residues 2247–2270 are lumenal; that stretch reads LIEKTKTDFGFYQAKTETTILDVD. Positions 2271–2291 form an intramembrane region, helical; sequence LRPASAWTLYAVATTILTPML. At 2292 to 2301 the chain is on the lumenal side; that stretch reads RHTIENTSAN. N-linked (GlcNAc...) asparagine; by host glycosylation is found at Asn2297 and Asn2301. The helical intramembrane region spans 2302 to 2322; sequence LSLAAIANQAAVLMGLGKGWP. The Lumenal segment spans residues 2323 to 2343; it reads LHRMDLGVPLLAMGCYSQVNP. Residues 2344-2364 form a helical membrane-spanning segment; sequence TTLTASLVMLLVHYAIIGPGL. Residues 2365 to 2409 lie on the Cytoplasmic side of the membrane; it reads QAKATREAQKRTAAGIMKNPTVDGITVIDLEPISYDPKFEKQLGQ. A helical transmembrane segment spans residues 2410–2430; the sequence is VMLLVLCAGQLLLMRTTWAFC. At 2431-2455 the chain is on the lumenal side; the sequence is EVLTLATGPILTLWEGNPGRFWNTT. Asn2453 is a glycosylation site (N-linked (GlcNAc...) asparagine; by host). A helical transmembrane segment spans residues 2456–2476; that stretch reads IAVSTANIFRGSYLAGAGLAF. Over 2477–3387 the chain is Cytoplasmic; the sequence is SLIKNAQTPR…SAHFESEGVL (911 aa). An mRNA cap 0-1 NS5-type MT domain is found at 2489 to 2751; sequence TGTTGETLGE…DADLGAGTRS (263 aa). Ser2543 contributes to the S-adenosyl-L-methionine binding site. Ser2543 carries the post-translational modification Phosphoserine. Catalysis depends on Lys2548, which acts as the For 2'-O-MTase activity. The SUMO-interacting motif motif lies at 2564–2567; the sequence is VVDL. Residues Gly2573, Trp2574, Thr2591, Lys2592, Asp2618, and Val2619 each coordinate S-adenosyl-L-methionine. Residue Asp2633 is the For 2'-O-MTase activity of the active site. Ile2634 serves as a coordination point for S-adenosyl-L-methionine. Catalysis depends on for 2'-O-MTase activity residues Lys2668 and Glu2704. An S-adenosyl-L-methionine-binding site is contributed by Tyr2706. Residues Glu2925, His2929, Cys2934, and Cys2937 each coordinate Zn(2+). The region spanning 3016 to 3166 is the RdRp catalytic domain; the sequence is LIYADDTAGW…PLDERFSTSL (151 aa). His3200, Cys3216, and Cys3335 together coordinate Zn(2+).

This sequence in the N-terminal section; belongs to the class I-like SAM-binding methyltransferase superfamily. mRNA cap 0-1 NS5-type methyltransferase family. In terms of assembly, homodimer. Interacts (via N-terminus) with host EXOC1 (via C-terminus); this interaction results in EXOC1 degradation through the proteasome degradation pathway. Forms heterodimers with envelope protein E in the endoplasmic reticulum and Golgi. As to quaternary structure, homodimer; in the endoplasmic reticulum and Golgi. Interacts with protein prM. Interacts with non-structural protein 1. In terms of assembly, homodimer; Homohexamer when secreted. Interacts with envelope protein E. Interacts (via N-terminus) with serine protease NS3. As to quaternary structure, forms a heterodimer with serine protease NS3. May form homooligomers. In terms of assembly, forms a heterodimer with NS2B. Interacts with NS4B. Interacts with unphosphorylated RNA-directed RNA polymerase NS5; this interaction stimulates RNA-directed RNA polymerase NS5 guanylyltransferase activity. Interacts with host SHFL. Interacts with host MAVS; this interaction inhibits the synthesis of IFN-beta. Interacts with host SHFL. Interacts with host AUP1; the interaction occurs in the presence of Dengue virus NS4B and induces lipophagy which facilitates production of virus progeny particles. As to quaternary structure, interacts with serine protease NS3. In terms of assembly, homodimer. Interacts with host STAT2; this interaction inhibits the phosphorylation of the latter, and, when all viral proteins are present (polyprotein), targets STAT2 for degradation. Interacts with serine protease NS3. Interacts with host PAF1 complex; the interaction may prevent the recruitment of the PAF1 complex to interferon-responsive genes, and thus reduces the immune response. Specific enzymatic cleavages in vivo yield mature proteins. Cleavages in the lumen of endoplasmic reticulum are performed by host signal peptidase, whereas cleavages in the cytoplasmic side are performed by serine protease NS3. Signal cleavage at the 2K-4B site requires a prior NS3 protease-mediated cleavage at the 4A-2K site. Post-translationally, cleaved in post-Golgi vesicles by a host furin, releasing the mature small envelope protein M, and peptide pr. This cleavage is incomplete as up to 30% of viral particles still carry uncleaved prM. In terms of processing, N-glycosylated. N-glycosylated. The excreted form is glycosylated and this is required for efficient secretion of the protein from infected cells. Post-translationally, acetylated by host KAT5. Acetylation modulates NS3 RNA-binding and unwinding activities and plays an important positive role for viral replication. In terms of processing, sumoylation of RNA-directed RNA polymerase NS5 increases NS5 protein stability allowing proper viral RNA replication. Phosphorylated on serines residues. This phosphorylation may trigger NS5 nuclear localization.

Its subcellular location is the virion. It is found in the host nucleus. The protein resides in the host cytoplasm. It localises to the host perinuclear region. The protein localises to the secreted. Its subcellular location is the virion membrane. It is found in the host endoplasmic reticulum membrane. The protein resides in the host mitochondrion. The catalysed reaction is Selective hydrolysis of -Xaa-Xaa-|-Yaa- bonds in which each of the Xaa can be either Arg or Lys and Yaa can be either Ser or Ala.. It carries out the reaction RNA(n) + a ribonucleoside 5'-triphosphate = RNA(n+1) + diphosphate. It catalyses the reaction a ribonucleoside 5'-triphosphate + H2O = a ribonucleoside 5'-diphosphate + phosphate + H(+). The enzyme catalyses ATP + H2O = ADP + phosphate + H(+). The catalysed reaction is a 5'-end (5'-triphosphoguanosine)-ribonucleoside in mRNA + S-adenosyl-L-methionine = a 5'-end (N(7)-methyl 5'-triphosphoguanosine)-ribonucleoside in mRNA + S-adenosyl-L-homocysteine. It carries out the reaction a 5'-end (N(7)-methyl 5'-triphosphoguanosine)-ribonucleoside in mRNA + S-adenosyl-L-methionine = a 5'-end (N(7)-methyl 5'-triphosphoguanosine)-(2'-O-methyl-ribonucleoside) in mRNA + S-adenosyl-L-homocysteine + H(+). Functionally, plays a role in virus budding by binding to the cell membrane and gathering the viral RNA into a nucleocapsid that forms the core of a mature virus particle. During virus entry, may induce genome penetration into the host cytoplasm after hemifusion induced by the surface proteins. Can migrate to the cell nucleus where it modulates host functions. Overcomes the anti-viral effects of host EXOC1 by sequestering and degrading the latter through the proteasome degradation pathway. Inhibits RNA silencing by interfering with host Dicer. Its function is as follows. Prevents premature fusion activity of envelope proteins in trans-Golgi by binding to envelope protein E at pH6.0. After virion release in extracellular space, gets dissociated from E dimers. In terms of biological role, acts as a chaperone for envelope protein E during intracellular virion assembly by masking and inactivating envelope protein E fusion peptide. prM is the only viral peptide matured by host furin in the trans-Golgi network probably to avoid catastrophic activation of the viral fusion activity in acidic Golgi compartment prior to virion release. prM-E cleavage is inefficient, and many virions are only partially matured. These uncleaved prM would play a role in immune evasion. Functionally, may play a role in virus budding. Exerts cytotoxic effects by activating a mitochondrial apoptotic pathway through M ectodomain. May display a viroporin activity. Binds to host cell surface receptor and mediates fusion between viral and cellular membranes. Envelope protein is synthesized in the endoplasmic reticulum in the form of heterodimer with protein prM. They play a role in virion budding in the ER, and the newly formed immature particle is covered with 60 spikes composed of heterodimer between precursor prM and envelope protein E. The virion is transported to the Golgi apparatus where the low pH causes dissociation of PrM-E heterodimers and formation of E homodimers. prM-E cleavage is inefficient, and many virions are only partially matured. These uncleaved prM would play a role in immune evasion. Its function is as follows. Involved in immune evasion, pathogenesis and viral replication. Once cleaved off the polyprotein, is targeted to three destinations: the viral replication cycle, the plasma membrane and the extracellular compartment. Essential for viral replication. Required for formation of the replication complex and recruitment of other non-structural proteins to the ER-derived membrane structures. Excreted as a hexameric lipoparticle that plays a role against host immune response. Antagonizing the complement function. Binds to the host macrophages and dendritic cells. Inhibits signal transduction originating from Toll-like receptor 3 (TLR3). In terms of biological role, disrupts the host endothelial glycocalyx layer of host pulmonary microvascular endothelial cells, inducing degradation of sialic acid and shedding of heparan sulfate proteoglycans. NS1 induces expression of sialidases, heparanase, and activates cathepsin L, which activates heparanase via enzymatic cleavage. These effects are probably linked to the endothelial hyperpermeability observed in severe dengue disease. Functionally, component of the viral RNA replication complex that functions in virion assembly and antagonizes the host immune response. Required cofactor for the serine protease function of NS3. May have membrane-destabilizing activity and form viroporins. Its function is as follows. Displays three enzymatic activities: serine protease, NTPase and RNA helicase. NS3 serine protease, in association with NS2B, performs its autocleavage and cleaves the polyprotein at dibasic sites in the cytoplasm: C-prM, NS2A-NS2B, NS2B-NS3, NS3-NS4A, NS4A-2K and NS4B-NS5. NS3 RNA helicase binds RNA and unwinds dsRNA in the 3' to 5' direction. In terms of biological role, regulates the ATPase activity of the NS3 helicase activity. NS4A allows NS3 helicase to conserve energy during unwinding. Plays a role in the inhibition of the host innate immune response. Interacts with host MAVS and thereby prevents the interaction between RIGI and MAVS. In turn, IFN-beta production is impaired. Interacts with host AUP1 which mediates induction of lipophagy in host cells and facilitates production of virus progeny particles. Functionally, functions as a signal peptide for NS4B and is required for the interferon antagonism activity of the latter. Induces the formation of ER-derived membrane vesicles where the viral replication takes place. Inhibits interferon (IFN)-induced host STAT1 phosphorylation and nuclear translocation, thereby preventing the establishment of cellular antiviral state by blocking the IFN-alpha/beta pathway. Its function is as follows. Replicates the viral (+) and (-) RNA genome, and performs the capping of genomes in the cytoplasm. NS5 methylates viral RNA cap at guanine N-7 and ribose 2'-O positions. Besides its role in RNA genome replication, also prevents the establishment of cellular antiviral state by blocking the interferon-alpha/beta (IFN-alpha/beta) signaling pathway. Inhibits host TYK2 and STAT2 phosphorylation, thereby preventing activation of JAK-STAT signaling pathway. May reduce immune responses by preventing the recruitment of the host PAF1 complex to interferon-responsive genes. The polypeptide is Genome polyprotein (Dengue virus type 4 (strain Thailand/0348/1991) (DENV-4)).